Reading from the N-terminus, the 953-residue chain is Homeobox protein LUMINIDEPENDENS (953 aa).

The homeobox DNA-binding region spans 63 to 123 (KIGKRPRDLL…VTQKTRVRKQ (61 aa)). The tract at residues 404 to 430 (EQPGQKAAGKSPQTVRIGTSGRSRPMS) is disordered. The span at 414–425 (SPQTVRIGTSGR) shows a compositional bias: polar residues. A run of 5 repeats spans residues 498–502 (QPVNG), 507–511 (QPVNG), 516–520 (QPVNG), 525–529 (QPVNG), and 534–538 (QPVNG). Residues 498–538 (QPVNGFSTIQPVNGPSAVQPVNGPLAVQPVNGPSALQPVNG) form a 5 X 5 AA repeats of Q-P-V-N-G region. Disordered stretches follow at residues 606–668 (NSKE…EPQD), 733–763 (APNSSSSSNKQVEERVEVSLPSPTPSTNPGM), and 861–953 (VGQM…KRWR). Basic and acidic residues predominate over residues 608–623 (KEADVQRNRNRRERET). Residues 651-661 (PEIPSQQPPEE) are compositionally biased toward low complexity. Over residues 733–742 (APNSSSSSNK) the composition is skewed to polar residues. Over residues 869–884 (SSSWRSQQSQNSYYSH) the composition is skewed to low complexity. 2 stretches are compositionally biased toward polar residues: residues 888–934 (EIAS…QQQA) and 942–953 (THPYWNQNKRWR).

In terms of assembly, interacts with SUF4. As to expression, expressed in shoot apex, root apex, leaf primordia and floral buds.

The protein localises to the nucleus. In terms of biological role, seems to play a role in the regulation of flowering time in the autonomous flowering pathway by repressing FLOWERING LOCUS C expression. This chain is Homeobox protein LUMINIDEPENDENS (LD), found in Arabidopsis thaliana (Mouse-ear cress).